An 840-amino-acid polypeptide reads, in one-letter code: 9-beta-pimara-7,15-diene synthase, chloroplastic (840 aa).

The N-terminal 56 residues, 1-56, are a transit peptide targeting the chloroplast; the sequence is MASPMEAVARSSLVLAPRRRRALGLLPAAAAPFVLDCRRRHNGGMRRPHVSFACSA. Residues aspartate 589, aspartate 593, asparagine 733, serine 737, and glutamate 741 each contribute to the Mg(2+) site. The short motif at 589–593 is the DDXXD motif element; it reads DDFFD.

This sequence belongs to the terpene synthase family. Mg(2+) serves as cofactor.

The protein localises to the plastid. Its subcellular location is the chloroplast. The enzyme catalyses 9alpha-copalyl diphosphate = 9beta-pimara-7,15-diene + diphosphate. Functionally, involved in the biosynthesis of momilactone A and B phytoalexins. Catalyzes the conversion of syn-copalyl diphosphate to the phytoalexin precursor syn-pimara-7,15-diene. The protein is 9-beta-pimara-7,15-diene synthase, chloroplastic of Oryza sativa subsp. indica (Rice).